A 260-amino-acid chain; its full sequence is Hydroxyacylglutathione hydrolase (260 aa).

Residues His61, His63, Asp65, His66, His119, Asp138, and His176 each contribute to the Zn(2+) site.

It belongs to the metallo-beta-lactamase superfamily. Glyoxalase II family. Monomer. Zn(2+) serves as cofactor.

The enzyme catalyses an S-(2-hydroxyacyl)glutathione + H2O = a 2-hydroxy carboxylate + glutathione + H(+). The protein operates within secondary metabolite metabolism; methylglyoxal degradation; (R)-lactate from methylglyoxal: step 2/2. In terms of biological role, thiolesterase that catalyzes the hydrolysis of S-D-lactoyl-glutathione to form glutathione and D-lactic acid. The chain is Hydroxyacylglutathione hydrolase from Brucella anthropi (strain ATCC 49188 / DSM 6882 / CCUG 24695 / JCM 21032 / LMG 3331 / NBRC 15819 / NCTC 12168 / Alc 37) (Ochrobactrum anthropi).